The sequence spans 198 residues: Nucleoid occlusion factor SlmA (198 aa).

Positions N10–L70 constitute an HTH tetR-type domain. A DNA-binding region (H-T-H motif) is located at residues T33–F52. Residues E117–R144 adopt a coiled-coil conformation.

It belongs to the nucleoid occlusion factor SlmA family. Homodimer. Interacts with FtsZ.

Its subcellular location is the cytoplasm. It localises to the nucleoid. Functionally, required for nucleoid occlusion (NO) phenomenon, which prevents Z-ring formation and cell division over the nucleoid. Acts as a DNA-associated cell division inhibitor that binds simultaneously chromosomal DNA and FtsZ, and disrupts the assembly of FtsZ polymers. SlmA-DNA-binding sequences (SBS) are dispersed on non-Ter regions of the chromosome, preventing FtsZ polymerization at these regions. This Escherichia coli (strain 55989 / EAEC) protein is Nucleoid occlusion factor SlmA.